The chain runs to 415 residues: Histidine--tRNA ligase (415 aa).

It belongs to the class-II aminoacyl-tRNA synthetase family. As to quaternary structure, homodimer.

It is found in the cytoplasm. It catalyses the reaction tRNA(His) + L-histidine + ATP = L-histidyl-tRNA(His) + AMP + diphosphate + H(+). The sequence is that of Histidine--tRNA ligase from Clostridium botulinum (strain 657 / Type Ba4).